We begin with the raw amino-acid sequence, 101 residues long: Urease subunit beta (101 aa).

Belongs to the urease beta subunit family. Heterotrimer of UreA (gamma), UreB (beta) and UreC (alpha) subunits. Three heterotrimers associate to form the active enzyme.

The protein localises to the cytoplasm. It catalyses the reaction urea + 2 H2O + H(+) = hydrogencarbonate + 2 NH4(+). The protein operates within nitrogen metabolism; urea degradation; CO(2) and NH(3) from urea (urease route): step 1/1. This chain is Urease subunit beta, found in Rhodopseudomonas palustris (strain ATCC BAA-98 / CGA009).